A 691-amino-acid chain; its full sequence is DNA ligase (691 aa).

Residues 41–45 (DAEYD), 90–91 (SL), and Glu-130 contribute to the NAD(+) site. Catalysis depends on Lys-132, which acts as the N6-AMP-lysine intermediate. NAD(+) contacts are provided by Arg-153, Glu-190, Lys-307, and Lys-331. Zn(2+) contacts are provided by Cys-425, Cys-428, Cys-443, and Cys-449. The region spanning 610 to 691 (APQGVLAGKT…LHQLLEGNTP (82 aa)) is the BRCT domain.

The protein belongs to the NAD-dependent DNA ligase family. LigA subfamily. Mg(2+) serves as cofactor. Mn(2+) is required as a cofactor.

The catalysed reaction is NAD(+) + (deoxyribonucleotide)n-3'-hydroxyl + 5'-phospho-(deoxyribonucleotide)m = (deoxyribonucleotide)n+m + AMP + beta-nicotinamide D-nucleotide.. Functionally, DNA ligase that catalyzes the formation of phosphodiester linkages between 5'-phosphoryl and 3'-hydroxyl groups in double-stranded DNA using NAD as a coenzyme and as the energy source for the reaction. It is essential for DNA replication and repair of damaged DNA. This Burkholderia cenocepacia (strain HI2424) protein is DNA ligase.